An 83-amino-acid polypeptide reads, in one-letter code: Transmembrane protein EP84R (83 aa).

2 helical membrane-spanning segments follow: residues valine 31–leucine 51 and alanine 59–tyrosine 79.

Belongs to the asfivirus EP84R family.

The protein localises to the virion membrane. This chain is Transmembrane protein EP84R, found in Ornithodoros (relapsing fever ticks).